The sequence spans 205 residues: Large ribosomal subunit protein eL15 (205 aa).

2 disordered regions span residues 70–90 and 172–197; these read GRKR…HGVN and RGLR…KRRN.

The protein belongs to the eukaryotic ribosomal protein eL15 family.

In Dictyostelium discoideum (Social amoeba), this protein is Large ribosomal subunit protein eL15 (rpl15-1).